Reading from the N-terminus, the 429-residue chain is MLAIAGLIGCAGALATIAFRECLRQLQWWLAGADQGLVATARALPWWARLLVPTAGGLLAGLTLQYGLKWIPRKGAEDYMEAIAVGDGVLSARQSLVRSASSLCSVASGASIGREGPMVQLAAMCGSLLGRVLRHAMPVSVEHMRLLVACGAAAGITSAYNAPIAGAVFVCEIVFGAITTATLGPLLVSAVTADIIVRQFFGYGAVYAMPHFDFVSGWEVLTYLGLGLAAGMAGPLLLGLIDRARGAFARTRLPQALRLALGGLIVGALSIRVPEVWGNGYSVVNGFLHAPWLWQTVALVLVCKVGATAASAGSGAVGGVFTPTLFCGAALGLLYGTGMHALLPGAAPVPVSYAVVGMGALLAATTHAPLMSILMIFEMTLSYQVVLPLMLACITGYVTAHATGAPSVYARALARNRDDTLRLPPASSP.

Helical transmembrane passes span 1 to 21 (MLAIAGLIGCAGALATIAFRE), 44 to 64 (LPWWARLLVPTAGGLLAGLTL), 146 to 166 (LLVACGAAAGITSAYNAPIAG), 168 to 188 (VFVCEIVFGAITTATLGPLLV), 200 to 220 (FFGYGAVYAMPHFDFVSGWEV), 221 to 241 (LTYLGLGLAAGMAGPLLLGLI), 259 to 279 (LALGGLIVGALSIRVPEVWGN), 283 to 303 (VVNGFLHAPWLWQTVALVLVC), 315 to 335 (GAVGGVFTPTLFCGAALGLLY), 354 to 376 (AVVGMGALLAATTHAPLMSILMI), and 383 to 405 (YQVVLPLMLACITGYVTAHATGA).

Belongs to the chloride channel (TC 2.A.49) family. ClcB subfamily.

The protein resides in the cell inner membrane. This chain is Putative chloride channel protein ClcB-like, found in Ralstonia nicotianae (strain ATCC BAA-1114 / GMI1000) (Ralstonia solanacearum).